Reading from the N-terminus, the 481-residue chain is Cysteine--tRNA ligase (481 aa).

C27 is a Zn(2+) binding site. The 'HIGH' region motif lies at 29 to 39 (PTVYNYAHIGN). Zn(2+) contacts are provided by C222, H247, and E251. The short motif at 279-283 (KMSKS) is the 'KMSKS' region element. K282 lines the ATP pocket.

It belongs to the class-I aminoacyl-tRNA synthetase family. In terms of assembly, monomer. Zn(2+) is required as a cofactor.

It localises to the cytoplasm. It catalyses the reaction tRNA(Cys) + L-cysteine + ATP = L-cysteinyl-tRNA(Cys) + AMP + diphosphate. This Borrelia turicatae (strain 91E135) protein is Cysteine--tRNA ligase.